The sequence spans 274 residues: 3-methyl-2-oxobutanoate hydroxymethyltransferase (274 aa).

Residues aspartate 46 and aspartate 85 each contribute to the Mg(2+) site. Residues aspartate 46–serine 47, aspartate 85, and lysine 114 contribute to the 3-methyl-2-oxobutanoate site. Glutamate 116 is a binding site for Mg(2+). Glutamate 183 serves as the catalytic Proton acceptor.

The protein belongs to the PanB family. In terms of assembly, homodecamer; pentamer of dimers. Mg(2+) serves as cofactor.

The protein resides in the cytoplasm. It catalyses the reaction 3-methyl-2-oxobutanoate + (6R)-5,10-methylene-5,6,7,8-tetrahydrofolate + H2O = 2-dehydropantoate + (6S)-5,6,7,8-tetrahydrofolate. Its pathway is cofactor biosynthesis; coenzyme A biosynthesis. Its function is as follows. Catalyzes the reversible reaction in which hydroxymethyl group from 5,10-methylenetetrahydrofolate is transferred onto alpha-ketoisovalerate to form ketopantoate. The protein is 3-methyl-2-oxobutanoate hydroxymethyltransferase of Aeropyrum pernix (strain ATCC 700893 / DSM 11879 / JCM 9820 / NBRC 100138 / K1).